Consider the following 147-residue polypeptide: Peptidyl-lysine N-acetyltransferase YjaB (147 aa).

The region spanning 3 to 144 (ISIRRSRHEE…KPYPLLNLAY (142 aa)) is the N-acetyltransferase domain.

This sequence belongs to the acetyltransferase family.

It catalyses the reaction L-lysyl-[protein] + acetyl-CoA = N(6)-acetyl-L-lysyl-[protein] + CoA + H(+). Functionally, N-epsilon-lysine acetyltransferase that catalyzes acetylation of a large number of proteins. Binds acetyl-CoA. The protein is Peptidyl-lysine N-acetyltransferase YjaB (yjaB) of Escherichia coli (strain K12).